Consider the following 254-residue polypeptide: MATVDLRDNLLGISWVDSGWVPILNPSNVLEYFSERSNPFYDRTCNNEVVKMQRSTLDHLTQLVGVEYILLHTQEPILYIIRKQQRQSPTQVIPLADYYIIAGVVYQAPDLGSVISSRALSAVHGIQSAFDEAMSFCRYHPSKGYWWHFKDQEEKERVKPKSKRKEEPSSLFQRQRVDTLLLDLRNKFPPTFYQTKPGEKPVPVEVKKEPEVPVETVKPQEERETKPPAPPAPPRPPPQTTPNKPPPEKRARVQ.

The interval 190-254 (PTFYQTKPGE…PPPEKRARVQ (65 aa)) is disordered. Over residues 227 to 245 (PPAPPAPPRPPPQTTPNKP) the composition is skewed to pro residues.

This sequence belongs to the Mediator complex subunit 6 family. As to quaternary structure, component of the Mediator complex.

The protein localises to the nucleus. Its function is as follows. Component of the Mediator complex, a coactivator involved in the regulated transcription of nearly all RNA polymerase II-dependent genes. Mediator functions as a bridge to convey information from gene-specific regulatory proteins to the basal RNA polymerase II transcription machinery. Mediator is recruited to promoters by direct interactions with regulatory proteins and serves as a scaffold for the assembly of a functional preinitiation complex with RNA polymerase II and the general transcription factors. This Danio rerio (Zebrafish) protein is Mediator of RNA polymerase II transcription subunit 6 (med6).